The chain runs to 493 residues: Acetylcholine receptor subunit beta-type unc-29 (493 aa).

An N-terminal signal peptide occupies residues 1-26 (MRTNRLSWILVLSVVIFLVIINTINA). N-linked (GlcNAc...) asparagine glycosylation is found at asparagine 25 and asparagine 50. Over 27–232 (SDDEERLMVD…QVRIRRKTLF (206 aa)) the chain is Extracellular. Residues cysteine 155 and cysteine 169 are joined by a disulfide bond. The next 3 membrane-spanning stretches (helical) occupy residues 233-254 (YTVV…VFFL), 262-280 (ITLT…LLVS), and 296-317 (YLLL…IINV). The Cytoplasmic portion of the chain corresponds to 318-445 (YFRGPRTHRM…WKYVAMIIDR (128 aa)). A helical transmembrane segment spans residues 446-466 (LLLYVFFGITVGGTCGILFSA).

It belongs to the ligand-gated ion channel (TC 1.A.9) family. Acetylcholine receptor (TC 1.A.9.1) subfamily. Interacts with lev-1. Component of nicotinic acetylcholine receptor composed of 2 non-alpha subunits lev-1 and unc-29, and 3 alpha subunits unc-38, unc-63 and lev-8. Interacts with oig-4. Interacts with crld-1.

Its subcellular location is the postsynaptic cell membrane. It localises to the cell membrane. Functionally, non-alpha subunit of nicotinic acetylcholine receptor (nAChR). Involved in nAChR sensitivity to nicotine and levasimole. The protein is Acetylcholine receptor subunit beta-type unc-29 of Caenorhabditis elegans.